Reading from the N-terminus, the 209-residue chain is Uridine kinase (209 aa).

12-19 (GGSGSGKT) is a binding site for ATP.

The protein belongs to the uridine kinase family.

It localises to the cytoplasm. The enzyme catalyses uridine + ATP = UMP + ADP + H(+). It carries out the reaction cytidine + ATP = CMP + ADP + H(+). It participates in pyrimidine metabolism; CTP biosynthesis via salvage pathway; CTP from cytidine: step 1/3. The protein operates within pyrimidine metabolism; UMP biosynthesis via salvage pathway; UMP from uridine: step 1/1. The polypeptide is Uridine kinase (Listeria welshimeri serovar 6b (strain ATCC 35897 / DSM 20650 / CCUG 15529 / CIP 8149 / NCTC 11857 / SLCC 5334 / V8)).